A 120-amino-acid polypeptide reads, in one-letter code: Large ribosomal subunit protein eL34 (120 aa).

This sequence belongs to the eukaryotic ribosomal protein eL34 family.

This chain is Large ribosomal subunit protein eL34 (RPL34), found in Pisum sativum (Garden pea).